The sequence spans 313 residues: uncharacterized protein (313 aa).

A run of 3 helical transmembrane segments spans residues 19-41, 51-68, and 81-103; these read GLAV…AGFL, AIIG…IFFL, and IAEF…DFAI.

Its subcellular location is the cell membrane. This is an uncharacterized protein from Aquifex aeolicus (strain VF5).